Reading from the N-terminus, the 109-residue chain is MNKFLRHSLLLALLTGALSGVANAQTDKLIIESGDNARTRQDAAMDKEQWNDTRSLRQKVNKRTEKEWDKADVAFDAKDNCEKSANLNAYWEPNTLRCLDRRTGRVINP.

The signal sequence occupies residues 1 to 24 (MNKFLRHSLLLALLTGALSGVANA). Over residues 38 to 55 (RTRQDAAMDKEQWNDTRS) the composition is skewed to basic and acidic residues. The disordered stretch occupies residues 38–63 (RTRQDAAMDKEQWNDTRSLRQKVNKR).

This sequence belongs to the UPF0482 family.

The sequence is that of UPF0482 protein ESA_01750 from Cronobacter sakazakii (strain ATCC BAA-894) (Enterobacter sakazakii).